We begin with the raw amino-acid sequence, 508 residues long: Steroid 17-alpha-hydroxylase/17,20 lyase (508 aa).

Position 202 (N202) interacts with substrate. Residue C442 coordinates heme.

It belongs to the cytochrome P450 family. The cofactor is heme.

It is found in the endoplasmic reticulum membrane. The protein localises to the microsome membrane. The enzyme catalyses a C21-steroid + reduced [NADPH--hemoprotein reductase] + O2 = a 17alpha-hydroxy-C21-steroid + oxidized [NADPH--hemoprotein reductase] + H2O + H(+). It catalyses the reaction progesterone + reduced [NADPH--hemoprotein reductase] + O2 = 17alpha-hydroxyprogesterone + oxidized [NADPH--hemoprotein reductase] + H2O + H(+). It carries out the reaction pregnenolone + reduced [NADPH--hemoprotein reductase] + O2 = 17alpha-hydroxypregnenolone + oxidized [NADPH--hemoprotein reductase] + H2O + H(+). The catalysed reaction is 17alpha-hydroxyprogesterone + reduced [NADPH--hemoprotein reductase] + O2 = androst-4-ene-3,17-dione + acetate + oxidized [NADPH--hemoprotein reductase] + H2O + 2 H(+). The enzyme catalyses 17alpha-hydroxyprogesterone + reduced [NADPH--hemoprotein reductase] + O2 = 16alpha,17alpha-dihydroxyprogesterone + oxidized [NADPH--hemoprotein reductase] + H2O + H(+). It catalyses the reaction 16alpha,17alpha-dihydroxyprogesterone + reduced [NADPH--hemoprotein reductase] + O2 = 6beta,16alpha,17alpha-trihydroxyprogesterone + oxidized [NADPH--hemoprotein reductase] + H2O + H(+). It carries out the reaction 17alpha-hydroxypregnenolone + reduced [NADPH--hemoprotein reductase] + O2 = 3beta-hydroxyandrost-5-en-17-one + acetate + oxidized [NADPH--hemoprotein reductase] + H2O + 2 H(+). The catalysed reaction is 16alpha,17alpha-dihydroxypregnenolone + reduced [NADPH--hemoprotein reductase] + O2 = 3beta,16alpha-dihydroxy-androst-5-en-17-one + acetate + oxidized [NADPH--hemoprotein reductase] + H2O + 2 H(+). The enzyme catalyses 3beta-hydroxyandrost-5-en-17-one + reduced [NADPH--hemoprotein reductase] + O2 = 3beta,16alpha-dihydroxy-androst-5-en-17-one + oxidized [NADPH--hemoprotein reductase] + H2O + H(+). It catalyses the reaction androst-4-ene-3,17-dione + reduced [NADPH--hemoprotein reductase] + O2 = 16alpha-hydroxyandrost-4-ene-3,17-dione + oxidized [NADPH--hemoprotein reductase] + H2O + H(+). Its pathway is steroid hormone biosynthesis. It functions in the pathway steroid biosynthesis; glucocorticoid biosynthesis. With respect to regulation, regulated predominantly by intracellular cAMP levels. The 17,20-lyase activity is stimulated by cytochrome b5, which acts as an allosteric effector increasing the Vmax of the lyase activity. Functionally, a cytochrome P450 monooxygenase involved in corticoid and androgen biosynthesis. Catalyzes 17-alpha hydroxylation of C21 steroids, which is common for both pathways. A second oxidative step, required only for androgen synthesis, involves an acyl-carbon cleavage. The 17-alpha hydroxy intermediates, as part of adrenal glucocorticoids biosynthesis pathway, are precursors of cortisol. Hydroxylates steroid hormones, pregnenolone and progesterone to form 17-alpha hydroxy metabolites, followed by the cleavage of the C17-C20 bond to form C19 steroids, dehydroepiandrosterone (DHEA) and androstenedione. Has 16-alpha hydroxylase activity. Catalyzes 16-alpha hydroxylation of 17-alpha hydroxy pregnenolone, followed by the cleavage of the C17-C20 bond to form 16-alpha-hydroxy DHEA. Also 16-alpha hydroxylates androgens, relevant for estriol synthesis. Mechanistically, uses molecular oxygen inserting one oxygen atom into a substrate, and reducing the second into a water molecule, with two electrons provided by NADPH via cytochrome P450 reductase (CPR; NADPH-ferrihemoprotein reductase). In Pan troglodytes (Chimpanzee), this protein is Steroid 17-alpha-hydroxylase/17,20 lyase (CYP17A1).